A 239-amino-acid chain; its full sequence is tRNA (guanine-N(7)-)-methyltransferase (239 aa).

The S-adenosyl-L-methionine site is built by Glu69, Glu94, Asp121, and Asp144. The active site involves Asp144. Lys148 provides a ligand contact to substrate. An interaction with RNA region spans residues 150-155; that stretch reads RHNKRR. Substrate-binding positions include Asp180 and 217-220; that span reads TKFE.

This sequence belongs to the class I-like SAM-binding methyltransferase superfamily. TrmB family. In terms of assembly, monomer.

It catalyses the reaction guanosine(46) in tRNA + S-adenosyl-L-methionine = N(7)-methylguanosine(46) in tRNA + S-adenosyl-L-homocysteine. It participates in tRNA modification; N(7)-methylguanine-tRNA biosynthesis. Functionally, catalyzes the formation of N(7)-methylguanine at position 46 (m7G46) in tRNA. The polypeptide is tRNA (guanine-N(7)-)-methyltransferase (Pectobacterium atrosepticum (strain SCRI 1043 / ATCC BAA-672) (Erwinia carotovora subsp. atroseptica)).